A 103-amino-acid chain; its full sequence is MSGRGKGGKGLGKGGAKRHRKVLRDNIQGITKPAIRRLARRGGVKRISGLIYEETRGVLKIFLENVIRDSVTYTEHARRKTVTAMDVVYALKRQGRTLYGFGG.

Gly residues predominate over residues 1-14 (MSGRGKGGKGLGKG). The tract at residues 1–20 (MSGRGKGGKGLGKGGAKRHR) is disordered. The residue at position 2 (S2) is an N-acetylserine. An N6-acetyllysine modification is found at K17. Residues 17–21 (KRHRK) mediate DNA binding. An N6-methyllysine modification is found at K21.

This sequence belongs to the histone H4 family. As to quaternary structure, the nucleosome is a histone octamer containing two molecules each of H2A, H2B, H3 and H4 assembled in one H3-H4 heterotetramer and two H2A-H2B heterodimers. The octamer wraps approximately 147 bp of DNA.

The protein resides in the nucleus. Its subcellular location is the chromosome. In terms of biological role, core component of nucleosome. Nucleosomes wrap and compact DNA into chromatin, limiting DNA accessibility to the cellular machineries which require DNA as a template. Histones thereby play a central role in transcription regulation, DNA repair, DNA replication and chromosomal stability. DNA accessibility is regulated via a complex set of post-translational modifications of histones, also called histone code, and nucleosome remodeling. This is Histone H4 from Capsicum annuum (Capsicum pepper).